Consider the following 350-residue polypeptide: Selenide, water dikinase (350 aa).

Residue U15 is part of the active site. U15 is a non-standard amino acid (selenocysteine). Residues K18 and 47-49 (HNE) contribute to the ATP site. D50 lines the Mg(2+) pocket. Residues D67, D90, and 138–140 (GHS) contribute to the ATP site. D90 lines the Mg(2+) pocket. D227 contributes to the Mg(2+) binding site.

This sequence belongs to the selenophosphate synthase 1 family. Class I subfamily. Homodimer. Mg(2+) serves as cofactor.

The enzyme catalyses hydrogenselenide + ATP + H2O = selenophosphate + AMP + phosphate + 2 H(+). Functionally, synthesizes selenophosphate from selenide and ATP. The polypeptide is Selenide, water dikinase (Nitratidesulfovibrio vulgaris (strain DSM 19637 / Miyazaki F) (Desulfovibrio vulgaris)).